Consider the following 203-residue polypeptide: MRGKFITFEGIDGAGKSTHIDWVADRLRARADIAGVVTTREPGGTSLGEDLRQILLHRKMHLETEALLMFAARREHIAEVIAPALERGKWVISDRFTDATFAYQGGGRGLATERLEVLENWVQGSLQPDLTLLFDVPLETASARLAAARTPDKFEAESRAFFQRTRDEYLRRAAQSPHRFRVIDATRSIADIRDELEKILATI.

10–17 (GIDGAGKS) provides a ligand contact to ATP.

It belongs to the thymidylate kinase family.

It catalyses the reaction dTMP + ATP = dTDP + ADP. Its function is as follows. Phosphorylation of dTMP to form dTDP in both de novo and salvage pathways of dTTP synthesis. The chain is Thymidylate kinase from Cupriavidus taiwanensis (strain DSM 17343 / BCRC 17206 / CCUG 44338 / CIP 107171 / LMG 19424 / R1) (Ralstonia taiwanensis (strain LMG 19424)).